Here is a 208-residue protein sequence, read N- to C-terminus: Small ribosomal subunit protein uS5 (208 aa).

The S5 DRBM domain occupies 28–91; that stretch reads LEERLIYANR…EKAKKNVIRV (64 aa).

The protein belongs to the universal ribosomal protein uS5 family. Part of the 30S ribosomal subunit. Contacts proteins S4 and S8.

Functionally, with S4 and S12 plays an important role in translational accuracy. Located at the back of the 30S subunit body where it stabilizes the conformation of the head with respect to the body. The polypeptide is Small ribosomal subunit protein uS5 (Aquifex aeolicus (strain VF5)).